We begin with the raw amino-acid sequence, 359 residues long: Nicotinate-nucleotide--dimethylbenzimidazole phosphoribosyltransferase (359 aa).

E318 serves as the catalytic Proton acceptor.

This sequence belongs to the CobT family. Homodimer.

It catalyses the reaction 5,6-dimethylbenzimidazole + nicotinate beta-D-ribonucleotide = alpha-ribazole 5'-phosphate + nicotinate + H(+). The protein operates within nucleoside biosynthesis; alpha-ribazole biosynthesis; alpha-ribazole from 5,6-dimethylbenzimidazole: step 1/2. Functionally, catalyzes the synthesis of alpha-ribazole-5'-phosphate from nicotinate mononucleotide (NAMN) and 5,6-dimethylbenzimidazole (DMB). The chain is Nicotinate-nucleotide--dimethylbenzimidazole phosphoribosyltransferase from Escherichia coli O17:K52:H18 (strain UMN026 / ExPEC).